Here is a 284-residue protein sequence, read N- to C-terminus: MDRIASATFSCPAISLSRVCRISPFGLNIKTNHRKRFSCRVAVASGETSARVVVDNELDLEHKKHDLLRAVQDTQRGLTATSDQRSIIEEALVTVEGFNGGEEIDPVKLDGTWRLQYTSAPDVVVLFEAASRLPFFQVGQVFQKFECRDRSDGGIIRNVVQWSLPSLLEEQEGATLVVTAKFDKVSSRNIYLQFEEISVRNININEQLQALIAPAILPRSFLSLQLLQFIRTFKAQIPVNATSPGRRSVGGLYYLSYLDNNMLLGRSVGGGGVFVFTKSQPLEL.

The N-terminal 40 residues, 1-40 (MDRIASATFSCPAISLSRVCRISPFGLNIKTNHRKRFSCR), are a transit peptide targeting the chloroplast.

It belongs to the PAP/fibrillin family.

Its subcellular location is the plastid. It is found in the chloroplast. The protein resides in the plastoglobule. The chain is Probable plastid-lipid-associated protein 10, chloroplastic (PAP10) from Arabidopsis thaliana (Mouse-ear cress).